Reading from the N-terminus, the 74-residue chain is MVMLTCHLNDGDTWLFLWLFTAFVVAVLGLLLLHYRAVHGTEKTKCAKCKSNRNTTVDYVYMSHGDNGDYVYMN.

The polypeptide is Probable protein E5B (Homo sapiens (Human)).